The chain runs to 594 residues: Interactor of HORMAD1 protein 1 (594 aa).

Coiled-coil stretches lie at residues 109–135, 165–189, and 219–245; these read VGKSKGLLEQFEEKKKRAKDKCDSETL, QSILDSLETVAKTLQETIQAQNDLV, and EMKSNLKHLEVLVAQQSQEFQQLCEQL. Residues 434-443 are compositionally biased toward basic and acidic residues; it reads VEMRGKDKKQ. The tract at residues 434 to 454 is disordered; the sequence is VEMRGKDKKQQPRKAHRAHRG. The segment covering 444–454 has biased composition (basic residues); sequence QPRKAHRAHRG. Phosphoserine is present on residues S588 and S589.

In terms of assembly, part of the MCD recombinosome complex, at least composed of IHO1, REC114 and MEI4. Interacts with REC114. Interacts with MEI4. Interacts with HORMAD1. Interacts with ANKRD31.

Its subcellular location is the chromosome. Required for DNA double-strand breaks (DSBs) formation in unsynapsed regions during meiotic recombination. Probably acts by forming a complex with MEI4 and REC114, which activates DSBs formation in unsynapsed regions, an essential step to ensure completion of synapsis. Not required for HORMAD1 functions in pairing-independent synaptonemal complex formation, ATR recruitment to unsynapsed axes, meiotic silencing of unsynapsed chromatin (MSUC) or meiotic surveillance. The chain is Interactor of HORMAD1 protein 1 from Homo sapiens (Human).